The chain runs to 130 residues: Small ribosomal subunit protein uS8 (130 aa).

This sequence belongs to the universal ribosomal protein uS8 family. As to quaternary structure, part of the 30S ribosomal subunit. Contacts proteins S5 and S12.

In terms of biological role, one of the primary rRNA binding proteins, it binds directly to 16S rRNA central domain where it helps coordinate assembly of the platform of the 30S subunit. This Neisseria meningitidis serogroup C (strain 053442) protein is Small ribosomal subunit protein uS8.